Reading from the N-terminus, the 61-residue chain is Small ribosomal subunit protein uS14B (61 aa).

Residues Cys24, Cys27, Cys40, and Cys43 each contribute to the Zn(2+) site.

This sequence belongs to the universal ribosomal protein uS14 family. Zinc-binding uS14 subfamily. Part of the 30S ribosomal subunit. Contacts proteins S3 and S10. Requires Zn(2+) as cofactor.

In terms of biological role, binds 16S rRNA, required for the assembly of 30S particles and may also be responsible for determining the conformation of the 16S rRNA at the A site. The sequence is that of Small ribosomal subunit protein uS14B from Salinispora arenicola (strain CNS-205).